Reading from the N-terminus, the 476-residue chain is Light-independent protochlorophyllide reductase subunit N (476 aa).

Positions 31, 56, and 116 each coordinate [4Fe-4S] cluster.

This sequence belongs to the BchN/ChlN family. In terms of assembly, protochlorophyllide reductase is composed of three subunits; ChlL, ChlN and ChlB. Forms a heterotetramer of two ChlB and two ChlN subunits. [4Fe-4S] cluster serves as cofactor.

It is found in the plastid. Its subcellular location is the chloroplast. It carries out the reaction chlorophyllide a + oxidized 2[4Fe-4S]-[ferredoxin] + 2 ADP + 2 phosphate = protochlorophyllide a + reduced 2[4Fe-4S]-[ferredoxin] + 2 ATP + 2 H2O. It participates in porphyrin-containing compound metabolism; chlorophyll biosynthesis (light-independent). Component of the dark-operative protochlorophyllide reductase (DPOR) that uses Mg-ATP and reduced ferredoxin to reduce ring D of protochlorophyllide (Pchlide) to form chlorophyllide a (Chlide). This reaction is light-independent. The NB-protein (ChlN-ChlB) is the catalytic component of the complex. This is Light-independent protochlorophyllide reductase subunit N from Staurastrum punctulatum (Green alga).